The following is a 429-amino-acid chain: Argininosuccinate lyase (429 aa).

It belongs to the lyase 1 family. Argininosuccinate lyase subfamily.

The protein resides in the cytoplasm. The catalysed reaction is 2-(N(omega)-L-arginino)succinate = fumarate + L-arginine. Its pathway is amino-acid biosynthesis; L-arginine biosynthesis; L-arginine from L-ornithine and carbamoyl phosphate: step 3/3. In Pyrobaculum neutrophilum (strain DSM 2338 / JCM 9278 / NBRC 100436 / V24Sta) (Thermoproteus neutrophilus), this protein is Argininosuccinate lyase.